The chain runs to 500 residues: Glutamyl-tRNA(Gln) amidotransferase subunit A (500 aa).

Residues K93 and S168 each act as charge relay system in the active site. Catalysis depends on S192, which acts as the Acyl-ester intermediate.

The protein belongs to the amidase family. GatA subfamily. In terms of assembly, heterotrimer of A, B and C subunits.

It carries out the reaction L-glutamyl-tRNA(Gln) + L-glutamine + ATP + H2O = L-glutaminyl-tRNA(Gln) + L-glutamate + ADP + phosphate + H(+). Allows the formation of correctly charged Gln-tRNA(Gln) through the transamidation of misacylated Glu-tRNA(Gln) in organisms which lack glutaminyl-tRNA synthetase. The reaction takes place in the presence of glutamine and ATP through an activated gamma-phospho-Glu-tRNA(Gln). The protein is Glutamyl-tRNA(Gln) amidotransferase subunit A of Corynebacterium jeikeium (strain K411).